Consider the following 469-residue polypeptide: Type II secretion system protein HxcR (469 aa).

246–253 (GPTGSGKT) is an ATP binding site.

It belongs to the GSP E family.

Its subcellular location is the cytoplasm. It carries out the reaction ATP + H2O + cellular proteinSide 1 = ADP + phosphate + cellular proteinSide 2.. ATPase component of the type II secretion system required for the energy-dependent secretion of extracellular factors from the periplasm. Acts as a molecular motor to provide the energy that is required for the export of proteins. The Hxc system is involved in the secretion of low-molecular-weight alkaline phosphatase L-AP (LapA). Is probably also involved in the secretion of the phosphate-binding protein PstS. The sequence is that of Type II secretion system protein HxcR from Pseudomonas aeruginosa (strain ATCC 15692 / DSM 22644 / CIP 104116 / JCM 14847 / LMG 12228 / 1C / PRS 101 / PAO1).